The primary structure comprises 2038 residues: Fer-1-like protein 5 (2038 aa).

7 C2 domains span residues 1–100, 145–265, 307–424, 1055–1186, 1225–1345, 1467–1587, and 1705–1853; these read MLRV…MFVR, TQKK…TLLR, QNTR…QGMY, TPED…FTPL, IPCK…SLNY, PKPP…ARCG, and GPPG…KQCS. Ca(2+) contacts are provided by aspartate 1502, aspartate 1508, aspartate 1557, phenylalanine 1558, aspartate 1559, aspartate 1565, aspartate 1824, serine 1827, and aspartate 1830. A helical transmembrane segment spans residues 1961-1981; sequence IICLVVTLVIGFILLNFVYSA.

Belongs to the ferlin family. In terms of assembly, interacts (via second C2 domain) with EHD1 and EHD2. Ca(2+) is required as a cofactor. Expressed in differentiating myoblasts and myotubes.

It is found in the cell membrane. The protein resides in the membrane. Plays a role in myoblast fusion; probable mediator of endocytic recycling for membrane trafficking events during myotube formation. The protein is Fer-1-like protein 5 (Fer1l5) of Mus musculus (Mouse).